Reading from the N-terminus, the 217-residue chain is Peptide methionine sulfoxide reductase MsrA (217 aa).

Cys-54 is an active-site residue.

Belongs to the MsrA Met sulfoxide reductase family.

It carries out the reaction L-methionyl-[protein] + [thioredoxin]-disulfide + H2O = L-methionyl-(S)-S-oxide-[protein] + [thioredoxin]-dithiol. The catalysed reaction is [thioredoxin]-disulfide + L-methionine + H2O = L-methionine (S)-S-oxide + [thioredoxin]-dithiol. Functionally, has an important function as a repair enzyme for proteins that have been inactivated by oxidation. Catalyzes the reversible oxidation-reduction of methionine sulfoxide in proteins to methionine. The protein is Peptide methionine sulfoxide reductase MsrA of Maricaulis maris (strain MCS10) (Caulobacter maris).